Consider the following 214-residue polypeptide: tRNA (guanine-N(7)-)-methyltransferase (214 aa).

S-adenosyl-L-methionine-binding residues include glutamate 44, glutamate 69, aspartate 96, and aspartate 118. Aspartate 118 is a catalytic residue. Substrate contacts are provided by residues lysine 122, aspartate 154, and 191-194 (TEYE).

Belongs to the class I-like SAM-binding methyltransferase superfamily. TrmB family.

The catalysed reaction is guanosine(46) in tRNA + S-adenosyl-L-methionine = N(7)-methylguanosine(46) in tRNA + S-adenosyl-L-homocysteine. The protein operates within tRNA modification; N(7)-methylguanine-tRNA biosynthesis. Its function is as follows. Catalyzes the formation of N(7)-methylguanine at position 46 (m7G46) in tRNA. This Listeria innocua serovar 6a (strain ATCC BAA-680 / CLIP 11262) protein is tRNA (guanine-N(7)-)-methyltransferase.